The chain runs to 2130 residues: DNA polymerase zeta catalytic subunit (2130 aa).

Disordered regions lie at residues Pro528–Leu635, Gly734–Ala891, Phe927–Pro954, and Gln1189–Gln1243. A compositionally biased stretch (low complexity) spans Thr553–Ile574. The span at Pro620–Gly629 shows a compositional bias: polar residues. Residues Cys735–Pro753 are compositionally biased toward basic and acidic residues. Composition is skewed to polar residues over residues Ser771–Asp786, Leu794–Gly808, and Asp818–Glu835. The span at Leu840 to Arg860 shows a compositional bias: basic and acidic residues. Over residues Thr938–Pro954 the composition is skewed to polar residues. The segment covering Pro1228–Gln1243 has biased composition (low complexity). Zn(2+)-binding residues include Cys2041, Cys2045, Cys2054, and Cys2057. Residues Cys2086, Cys2089, Cys2098, and Cys2103 each coordinate [4Fe-4S] cluster. The CysB motif motif lies at Cys2086 to Cys2103.

This sequence belongs to the DNA polymerase type-B family. As to quaternary structure, catalytic subunit of the zeta DNA polymerase complex, which consists of PolZ1/DNApol-zeta and the accessory component PolZ2/Rev7. Interacts with the apurinic/apyrimidinic (AP) endonuclease Rrp1; the interaction is likely indirect and mediated via PolZ2. It depends on [4Fe-4S] cluster as a cofactor.

The catalysed reaction is DNA(n) + a 2'-deoxyribonucleoside 5'-triphosphate = DNA(n+1) + diphosphate. With respect to regulation, inhibited by tetracyclic diterpene antibiotic aphidicolin. Its function is as follows. As the catalytic subunit of the DNA polymerase zeta complex, plays a crucial role in translesion DNA synthesis (TLS) and various DNA repair mechanisms. Lacks an intrinsic 3'-5' exonuclease activity and thus has no proofreading function. During homologous recombination (HR) repair, has a overlapping role with the error-prone translesion polymerase eta to initiate repair synthesis which is completed by end joining or another polymerase that can bind and reinitiate synthesis. May participate in the Rrp1-dependent base excision repair (BER) pathway responsible for repair of DNA lesions that gives rise to apurinic/apyrimidinic (AP) sites. Unlike mammalian orthologs, it is not an error-prone polymerase. The protein is DNA polymerase zeta catalytic subunit of Drosophila melanogaster (Fruit fly).